The sequence spans 111 residues: Iron-sulfur cluster assembly protein CyaY (111 aa).

The protein belongs to the frataxin family.

Its function is as follows. Involved in iron-sulfur (Fe-S) cluster assembly. May act as a regulator of Fe-S biogenesis. The sequence is that of Iron-sulfur cluster assembly protein CyaY from Cupriavidus pinatubonensis (strain JMP 134 / LMG 1197) (Cupriavidus necator (strain JMP 134)).